Here is a 1036-residue protein sequence, read N- to C-terminus: MLSDDTSFRQISSERILNYTVNKWINDATGFSVASVKTPTSRLQGSFVVATEAHDNLGCPHTLEHLCFMGSKKYPMNGILTKFAGRACGDINACTDVDYTSYELSAAEEDGFLRLLPVFADHILSPILSDEAFCTEVYHINGMGEESGVVYSEMQNTQSSETDVMFDCMRTSQYPVTSGYYYETGGHPSELRKLSIEKIREYHKEMYVPSNICLIVTGCINESRLLSCASGIVKEILANGIITPPTWTRPWCSTNVDYTIPEPILKTVKFSSEDEYTGSVSLAWNGPSALDAYTVFAIETLCEFLSESAVSPFGQTFVEIEDPFCSFVYFYVSLRVPCSIQLFFDSVPLEKINGLEQRALRLLAETKQIDMNRMKDYLKTRRDQYLTNLEAFPSSLFMKILTLDHVYGSREGKDLPNLLKMLEYNRLLEEWEEKDWLKLLKKWFVENNSVTVIALPSFEMAENIKKENAEQLNKRRCLLGASGLEKLAEKLKKSKEKNEQKLSVNLISSFRISDPESIRFYSSTTARTRSAGQPFDNEVQTYIDTDVSSENPFIQFDHIDSSFVQLATYIDTSMIPSSLKPYLSVFAKYIEAAPALLSGTIPTPYHEVVKQLERDTVSLNVSLSFDTSSCGYAYYETKRELLSIEIKVTRENYEKGVYWIRNLLAKTVWDRERMLSVINQQLADIPFQKRDAEFILPSYFDIRLYNDCSLKYSLNTLSQEKILRELRDKLQNDHSSIFDAFQKMRNYMLQHQAIRIHVIGDILKLPQPISTWNKLLDSECHRNPNMEFLSTFSKNYLKPQEFGSSSSLTVIPMPSNESSDLVFSIPGITSWLDPSLPVIVLIANYLGLMDGPFWNTIRGSGLAYGFNMSIDVDGGVLYYCINTSPDVYKAWASSRDLVKSLISGEVQVSSFDLESAKCVSYSIVSELENNAIYSSKNSFTLLSIKGLNKDEDHKFLEKVKQVTLQQFLEGLKIYCLPFFSSSNNLAVITSSLAKIEQTVEQFTEEGFNVNVESLHEIQGIESESEDDLSVGGNDDN.

This is an uncharacterized protein from Schizosaccharomyces pombe (strain 972 / ATCC 24843) (Fission yeast).